A 284-amino-acid polypeptide reads, in one-letter code: TnP I resolvase (284 aa).

The region spanning 1 to 84 (MDVAKQFSSY…SLAKFNEFLI (84 aa)) is the Core-binding (CB) domain. A Tyr recombinase domain is found at 107–282 (ASPTQIVELD…NQLQLKNKME (176 aa)). Residues arginine 145, lysine 170, histidine 234, arginine 237, and histidine 260 contribute to the active site. Tyrosine 269 (O-(3'-phospho-DNA)-tyrosine intermediate) is an active-site residue.

The protein belongs to the 'phage' integrase family.

Resolvase catalyzes the resolution (a site-specific recombination) of the cointegrated replicon to yield the final transposition products. The polypeptide is TnP I resolvase (tnpI) (Bacillus thuringiensis).